The primary structure comprises 488 residues: Glutamyl-tRNA(Gln) amidotransferase subunit A (488 aa).

Active-site charge relay system residues include lysine 77 and serine 152. The active-site Acyl-ester intermediate is the serine 176.

This sequence belongs to the amidase family. GatA subfamily. Heterotrimer of A, B and C subunits.

The enzyme catalyses L-glutamyl-tRNA(Gln) + L-glutamine + ATP + H2O = L-glutaminyl-tRNA(Gln) + L-glutamate + ADP + phosphate + H(+). Its function is as follows. Allows the formation of correctly charged Gln-tRNA(Gln) through the transamidation of misacylated Glu-tRNA(Gln) in organisms which lack glutaminyl-tRNA synthetase. The reaction takes place in the presence of glutamine and ATP through an activated gamma-phospho-Glu-tRNA(Gln). The protein is Glutamyl-tRNA(Gln) amidotransferase subunit A of Streptococcus uberis (strain ATCC BAA-854 / 0140J).